Consider the following 377-residue polypeptide: UPF0754 membrane protein LMHCC_0318 (377 aa).

2 consecutive transmembrane segments (helical) span residues M1–T21 and Y357–I377.

This sequence belongs to the UPF0754 family.

It is found in the cell membrane. The chain is UPF0754 membrane protein LMHCC_0318 from Listeria monocytogenes serotype 4a (strain HCC23).